Here is a 201-residue protein sequence, read N- to C-terminus: Alpha-1-acid glycoprotein 1 (201 aa).

The signal sequence occupies residues 1–18 (MALSWVLTVLSLLPLLEA). A Pyrrolidone carboxylic acid modification is found at Q19. 2 cysteine pairs are disulfide-bonded: C23–C165 and C90–C183. N-linked (GlcNAc...) (complex) asparagine glycosylation occurs at N33. A glycan (N-linked (GlcNAc...) asparagine) is linked at N56. N-linked (GlcNAc...) (complex) asparagine glycosylation is present at N72. 2 N-linked (GlcNAc...) asparagine glycosylation sites follow: N93 and N103.

Belongs to the calycin superfamily. Lipocalin family. In terms of processing, N-glycosylated. N-glycan heterogeneity at Asn-33: Hex5HexNAc4 (minor), Hex6HexNAc5 (major) and dHex1Hex6HexNAc5 (minor). Expressed by the liver and secreted in plasma.

It is found in the secreted. In terms of biological role, functions as a transport protein in the blood stream. Binds various ligands in the interior of its beta-barrel domain. Also binds synthetic drugs and influences their distribution and availability in the body. Appears to function in modulating the activity of the immune system during the acute-phase reaction. The sequence is that of Alpha-1-acid glycoprotein 1 (ORM1) from Homo sapiens (Human).